The chain runs to 502 residues: ATP synthase subunit alpha (502 aa).

169-176 (GDRQTGKT) is a binding site for ATP.

This sequence belongs to the ATPase alpha/beta chains family. In terms of assembly, F-type ATPases have 2 components, CF(1) - the catalytic core - and CF(0) - the membrane proton channel. CF(1) has five subunits: alpha(3), beta(3), gamma(1), delta(1), epsilon(1). CF(0) has three main subunits: a(1), b(2) and c(9-12). The alpha and beta chains form an alternating ring which encloses part of the gamma chain. CF(1) is attached to CF(0) by a central stalk formed by the gamma and epsilon chains, while a peripheral stalk is formed by the delta and b chains.

It localises to the cell membrane. It carries out the reaction ATP + H2O + 4 H(+)(in) = ADP + phosphate + 5 H(+)(out). Functionally, produces ATP from ADP in the presence of a proton gradient across the membrane. The alpha chain is a regulatory subunit. This Clostridium perfringens (strain SM101 / Type A) protein is ATP synthase subunit alpha.